Reading from the N-terminus, the 445-residue chain is Ribosomal protein uS12 methylthiotransferase RimO (445 aa).

Residues 4–119 (LKFGLVSLGC…LDDAIEDFFN (116 aa)) form the MTTase N-terminal domain. [4Fe-4S] cluster is bound by residues C13, C48, C82, C156, C160, and C163. In terms of domain architecture, Radical SAM core spans 142-372 (TTGEYSSYVR…MLIQQQVSKN (231 aa)). The 67-residue stretch at 375–441 (AKKIGKVYKV…EYDLIGVVYN (67 aa)) folds into the TRAM domain.

This sequence belongs to the methylthiotransferase family. RimO subfamily. Requires [4Fe-4S] cluster as cofactor.

Its subcellular location is the cytoplasm. It catalyses the reaction L-aspartate(89)-[ribosomal protein uS12]-hydrogen + (sulfur carrier)-SH + AH2 + 2 S-adenosyl-L-methionine = 3-methylsulfanyl-L-aspartate(89)-[ribosomal protein uS12]-hydrogen + (sulfur carrier)-H + 5'-deoxyadenosine + L-methionine + A + S-adenosyl-L-homocysteine + 2 H(+). Catalyzes the methylthiolation of an aspartic acid residue of ribosomal protein uS12. The sequence is that of Ribosomal protein uS12 methylthiotransferase RimO from Clostridium acetobutylicum (strain ATCC 824 / DSM 792 / JCM 1419 / IAM 19013 / LMG 5710 / NBRC 13948 / NRRL B-527 / VKM B-1787 / 2291 / W).